Consider the following 508-residue polypeptide: Amphoterin-induced protein 3 (508 aa).

An N-terminal signal peptide occupies residues 1 to 19 (MAWLVLSGILLCMLGAGLG). Residues 20–383 (TSDLEDVLPP…ARPEPETFNT (364 aa)) are Extracellular-facing. The LRRNT domain maps to 25-61 (DVLPPAPHNCPDICICAADVLSCAGRGLQDLPVALPT). 2 cysteine pairs are disulfide-bonded: Cys-34/Cys-40 and Cys-38/Cys-47. 6 LRR repeats span residues 62-83 (TAAE…WLAP), 86-107 (RLRA…AFTN), 110-133 (GLRT…DGLE), 134-155 (ELEK…AFQG), 158-178 (MLSH…NHLH), and 184-207 (RLRT…AALP). Asn-107 is a glycosylation site (N-linked (GlcNAc...) asparagine). Asn-142 carries an N-linked (GlcNAc...) asparagine glycan. An LRRCT domain is found at 219–275 (NPLPCDCSLYHLLRRWHQRGLSALHDFEREYTCLVFKVSESRVRFFEHSRVFKNCSV). Intrachain disulfides connect Cys-223–Cys-251, Cys-225–Cys-273, and Cys-300–Cys-352. Residues Asn-272, Asn-301, Asn-362, and Asn-368 are each glycosylated (N-linked (GlcNAc...) asparagine). Positions 279-370 (PGLELPEEQL…HNQTLEYNVS (92 aa)) constitute an Ig-like C2-type domain. Residues 384–404 (GFTTLLGCIVGLVLVLLYLFA) traverse the membrane as a helical segment. Over 405–508 (PPCRGCCHCC…STGSEGLVMS (104 aa)) the chain is Cytoplasmic.

Belongs to the immunoglobulin superfamily. AMIGO family. As to quaternary structure, binds AMIGO1 or AMIGO2. As to expression, ubiquitous.

It is found in the membrane. In terms of biological role, may mediate heterophilic cell-cell interaction. May contribute to signal transduction through its intracellular domain. This is Amphoterin-induced protein 3 from Mus musculus (Mouse).